The following is a 236-amino-acid chain: MLSSLLRRLARALFWFAAGSIVLVLVFRWVPPPGTALMVERKVQSWVSGEPIDLQRDWQPWESISDDLKVAVIAGEDQKFANHWGFDIPAIQAALAYNERGGNIRGASTLTQQVAKNLFLWSGRSWLRKGLEAWFTALIELFWSKERILEVYLNSAEWGKGVFGAQAAARYHFGIDASRLSRQQAAQLAAVLPSPIKWSASRPSAYVASRAGWIRRQMSQLGGPSYLMQLDASRRP.

The chain crosses the membrane as a helical span at residues A12 to P31.

Belongs to the glycosyltransferase 51 family.

It is found in the cell inner membrane. The enzyme catalyses [GlcNAc-(1-&gt;4)-Mur2Ac(oyl-L-Ala-gamma-D-Glu-L-Lys-D-Ala-D-Ala)](n)-di-trans,octa-cis-undecaprenyl diphosphate + beta-D-GlcNAc-(1-&gt;4)-Mur2Ac(oyl-L-Ala-gamma-D-Glu-L-Lys-D-Ala-D-Ala)-di-trans,octa-cis-undecaprenyl diphosphate = [GlcNAc-(1-&gt;4)-Mur2Ac(oyl-L-Ala-gamma-D-Glu-L-Lys-D-Ala-D-Ala)](n+1)-di-trans,octa-cis-undecaprenyl diphosphate + di-trans,octa-cis-undecaprenyl diphosphate + H(+). The protein operates within cell wall biogenesis; peptidoglycan biosynthesis. Its function is as follows. Peptidoglycan polymerase that catalyzes glycan chain elongation from lipid-linked precursors. This is Biosynthetic peptidoglycan transglycosylase from Pseudomonas putida (strain W619).